We begin with the raw amino-acid sequence, 279 residues long: Glutamate racemase (279 aa).

Residues 13-14 and 45-46 contribute to the substrate site; these read DS and YG. The Proton donor/acceptor role is filled by C76. 77–78 serves as a coordination point for substrate; sequence NT. Catalysis depends on C185, which acts as the Proton donor/acceptor. Residue 186 to 187 coordinates substrate; it reads TH.

Belongs to the aspartate/glutamate racemases family.

The enzyme catalyses L-glutamate = D-glutamate. Its pathway is cell wall biogenesis; peptidoglycan biosynthesis. In terms of biological role, provides the (R)-glutamate required for cell wall biosynthesis. This is Glutamate racemase from Picosynechococcus sp. (strain ATCC 27264 / PCC 7002 / PR-6) (Agmenellum quadruplicatum).